Consider the following 522-residue polypeptide: Protein GDS1 (522 aa).

Disordered stretches follow at residues 56–88, 222–268, 300–391, and 433–489; these read ALDD…PKKD, QQLE…SSNS, LSPS…SHNA, and STQT…SRNE. Residues 62 to 73 show a composition bias toward polar residues; the sequence is LAGSSFSSSQEI. Basic and acidic residues predominate over residues 74–88; sequence KATKPKKDFGAPKKD. Polar residues-rich tracts occupy residues 222 to 236, 244 to 260, 300 to 314, and 355 to 366; these read QQLE…FNSN, SSNQ…SMTD, LSPS…LLTP, and SQSLSVLSTPKK. Residues 368 to 378 show a composition bias toward low complexity; the sequence is SSASLSTFASS. A compositionally biased stretch (polar residues) spans 379–391; sequence KNISPDSSLSHNA. The segment covering 439–467 has biased composition (low complexity); it reads ESSSESSQYNSSSSSPVNSAAASSAESLS. A compositionally biased stretch (polar residues) spans 468-489; sequence DINSSQDNGRESNPSSQESRNE.

In terms of biological role, involved in nuclear control of mitochondria. The polypeptide is Protein GDS1 (GDS1) (Saccharomyces cerevisiae (strain ATCC 204508 / S288c) (Baker's yeast)).